The following is a 292-amino-acid chain: Coatomer subunit epsilon-1 (292 aa).

The protein belongs to the COPE family. Oligomeric complex that consists of at least the alpha, beta, beta', gamma, delta, epsilon and zeta subunits.

It is found in the cytoplasm. Its subcellular location is the golgi apparatus membrane. It localises to the cytoplasmic vesicle. The protein localises to the COPI-coated vesicle membrane. In terms of biological role, the coatomer is a cytosolic protein complex that binds to dilysine motifs and reversibly associates with Golgi non-clathrin-coated vesicles, which further mediate biosynthetic protein transport from the ER, via the Golgi up to the trans Golgi network. The coatomer complex is required for budding from Golgi membranes, and is essential for the retrograde Golgi-to-ER transport of dilysine-tagged proteins. This chain is Coatomer subunit epsilon-1, found in Arabidopsis thaliana (Mouse-ear cress).